Reading from the N-terminus, the 213-residue chain is LexA repressor (213 aa).

The segment at residues 27–47 is a DNA-binding region (H-T-H motif); that stretch reads QTEIARAFGFKGVRAAQYHLE. Residues Ser-133 and Lys-170 each act as for autocatalytic cleavage activity in the active site.

The protein belongs to the peptidase S24 family. Homodimer.

The enzyme catalyses Hydrolysis of Ala-|-Gly bond in repressor LexA.. In terms of biological role, represses a number of genes involved in the response to DNA damage (SOS response), including recA and lexA. In the presence of single-stranded DNA, RecA interacts with LexA causing an autocatalytic cleavage which disrupts the DNA-binding part of LexA, leading to derepression of the SOS regulon and eventually DNA repair. The polypeptide is LexA repressor (Xanthomonas campestris).